Reading from the N-terminus, the 273-residue chain is Formamidopyrimidine-DNA glycosylase (273 aa).

The Schiff-base intermediate with DNA role is filled by Pro2. The active-site Proton donor is the Glu3. Lys58 serves as the catalytic Proton donor; for beta-elimination activity. 3 residues coordinate DNA: His92, Arg111, and Lys153. An FPG-type zinc finger spans residues 238–272 (KVYGREGQSCLSCSSTIIKIKHSGRSTFYCKTCQY). The active-site Proton donor; for delta-elimination activity is the Arg262.

The protein belongs to the FPG family. In terms of assembly, monomer. It depends on Zn(2+) as a cofactor.

The enzyme catalyses Hydrolysis of DNA containing ring-opened 7-methylguanine residues, releasing 2,6-diamino-4-hydroxy-5-(N-methyl)formamidopyrimidine.. It carries out the reaction 2'-deoxyribonucleotide-(2'-deoxyribose 5'-phosphate)-2'-deoxyribonucleotide-DNA = a 3'-end 2'-deoxyribonucleotide-(2,3-dehydro-2,3-deoxyribose 5'-phosphate)-DNA + a 5'-end 5'-phospho-2'-deoxyribonucleoside-DNA + H(+). Functionally, involved in base excision repair of DNA damaged by oxidation or by mutagenic agents. Acts as a DNA glycosylase that recognizes and removes damaged bases. Has a preference for oxidized purines, such as 7,8-dihydro-8-oxoguanine (8-oxoG). Has AP (apurinic/apyrimidinic) lyase activity and introduces nicks in the DNA strand. Cleaves the DNA backbone by beta-delta elimination to generate a single-strand break at the site of the removed base with both 3'- and 5'-phosphates. This chain is Formamidopyrimidine-DNA glycosylase, found in Rickettsia conorii (strain ATCC VR-613 / Malish 7).